Here is a 525-residue protein sequence, read N- to C-terminus: Phospho-2-dehydro-3-deoxyheptonate aldolase 1, chloroplastic (525 aa).

Residues 1 to 13 (MALSNASSLSTRS) are compositionally biased toward polar residues. Residues 1–35 (MALSNASSLSTRSIYGGDLSHRPSNRQSSFTFHPA) are disordered. Residues 1-52 (MALSNASSLSTRSIYGGDLSHRPSNRQSSFTFHPAVNTKPKSVNLVTAVHAA) constitute a chloroplast transit peptide.

The protein belongs to the class-II DAHP synthase family.

It is found in the plastid. The protein localises to the chloroplast. It catalyses the reaction D-erythrose 4-phosphate + phosphoenolpyruvate + H2O = 7-phospho-2-dehydro-3-deoxy-D-arabino-heptonate + phosphate. It participates in metabolic intermediate biosynthesis; chorismate biosynthesis; chorismate from D-erythrose 4-phosphate and phosphoenolpyruvate: step 1/7. The sequence is that of Phospho-2-dehydro-3-deoxyheptonate aldolase 1, chloroplastic (DHS1) from Arabidopsis thaliana (Mouse-ear cress).